A 326-amino-acid chain; its full sequence is Pyruvate dehydrogenase E1 component subunit alpha (326 aa).

As to quaternary structure, heterodimer of an alpha and a beta chain. The cofactor is thiamine diphosphate.

It catalyses the reaction N(6)-[(R)-lipoyl]-L-lysyl-[protein] + pyruvate + H(+) = N(6)-[(R)-S(8)-acetyldihydrolipoyl]-L-lysyl-[protein] + CO2. Its function is as follows. The pyruvate dehydrogenase complex catalyzes the overall conversion of pyruvate to acetyl-CoA and CO(2). It contains multiple copies of three enzymatic components: pyruvate dehydrogenase (E1), dihydrolipoamide acetyltransferase (E2) and lipoamide dehydrogenase (E3). The sequence is that of Pyruvate dehydrogenase E1 component subunit alpha (pdhA) from Rickettsia typhi (strain ATCC VR-144 / Wilmington).